The sequence spans 150 residues: Deoxyuridine 5'-triphosphate nucleotidohydrolase (150 aa).

Substrate-binding positions include 69-71, Asn-82, 86-88, and Met-96; these read RSG and LID.

Belongs to the dUTPase family. It depends on Mg(2+) as a cofactor.

It catalyses the reaction dUTP + H2O = dUMP + diphosphate + H(+). It participates in pyrimidine metabolism; dUMP biosynthesis; dUMP from dCTP (dUTP route): step 2/2. In terms of biological role, this enzyme is involved in nucleotide metabolism: it produces dUMP, the immediate precursor of thymidine nucleotides and it decreases the intracellular concentration of dUTP so that uracil cannot be incorporated into DNA. The polypeptide is Deoxyuridine 5'-triphosphate nucleotidohydrolase (Alcanivorax borkumensis (strain ATCC 700651 / DSM 11573 / NCIMB 13689 / SK2)).